Reading from the N-terminus, the 177-residue chain is Large ribosomal subunit protein uL6 (177 aa).

The protein belongs to the universal ribosomal protein uL6 family. As to quaternary structure, part of the 50S ribosomal subunit.

Functionally, this protein binds to the 23S rRNA, and is important in its secondary structure. It is located near the subunit interface in the base of the L7/L12 stalk, and near the tRNA binding site of the peptidyltransferase center. This Citrobacter koseri (strain ATCC BAA-895 / CDC 4225-83 / SGSC4696) protein is Large ribosomal subunit protein uL6.